Consider the following 121-residue polypeptide: Large ribosomal subunit protein bL12 (121 aa).

The protein belongs to the bacterial ribosomal protein bL12 family. Homodimer. Part of the ribosomal stalk of the 50S ribosomal subunit. Forms a multimeric L10(L12)X complex, where L10 forms an elongated spine to which 2 to 4 L12 dimers bind in a sequential fashion. Binds GTP-bound translation factors.

Its function is as follows. Forms part of the ribosomal stalk which helps the ribosome interact with GTP-bound translation factors. Is thus essential for accurate translation. This is Large ribosomal subunit protein bL12 from Shewanella piezotolerans (strain WP3 / JCM 13877).